We begin with the raw amino-acid sequence, 676 residues long: Head-specific guanylate cyclase (676 aa).

In terms of domain architecture, Guanylate cyclase spans 466–593 (TILFSDIVGF…HSVTIANKFE (128 aa)).

It belongs to the adenylyl cyclase class-4/guanylyl cyclase family. In terms of assembly, heterodimer. Head, where it is preferentially expressed in the CNS and the retina. Not found in bodies.

The protein localises to the cytoplasm. It catalyses the reaction GTP = 3',5'-cyclic GMP + diphosphate. May have a role in phototransduction. Catalyzes the conversion of GTP to cGMP, a common second messenger that is utilized in a wide variety of cells and signal transduction pathways. A second subunit is required for enzyme activity. In Drosophila melanogaster (Fruit fly), this protein is Head-specific guanylate cyclase (Gycalpha99B).